Reading from the N-terminus, the 395-residue chain is Protein UNIFOLIATA (395 aa).

Disordered stretches follow at residues 147–170 (SQEG…GGGS) and 185–223 (QIRR…GERQ). The segment covering 202–211 (EEGEEEEEDN) has biased composition (acidic residues). DNA-binding regions lie at residues 224–228 (REHPF), 293–300 (NKPKMRHY), and 364–367 (YGPT).

This sequence belongs to the FLO/LFY family. As to expression, highly expressed in leaf, leaflet, inflorescence and lateral shoot primordia on the main shoot axis, and in floral organ and carpel primordia.

It is found in the nucleus. Its function is as follows. May regulate indeterminacy during leaf and flower development. The protein is Protein UNIFOLIATA (UNI) of Pisum sativum (Garden pea).